The following is an 856-amino-acid chain: Leucine--tRNA ligase (856 aa).

A 'HIGH' region motif is present at residues Pro-42–His-52. The 'KMSKS' region motif lies at Lys-615–Ser-619. Lys-618 is an ATP binding site.

This sequence belongs to the class-I aminoacyl-tRNA synthetase family.

It localises to the cytoplasm. The enzyme catalyses tRNA(Leu) + L-leucine + ATP = L-leucyl-tRNA(Leu) + AMP + diphosphate. The chain is Leucine--tRNA ligase from Chromohalobacter salexigens (strain ATCC BAA-138 / DSM 3043 / CIP 106854 / NCIMB 13768 / 1H11).